The chain runs to 445 residues: 3-phosphoshikimate 1-carboxyvinyltransferase (445 aa).

3 residues coordinate 3-phosphoshikimate: K28, S29, and R33. K28 lines the phosphoenolpyruvate pocket. Phosphoenolpyruvate contacts are provided by G101 and R129. Positions 175, 177, 328, and 355 each coordinate 3-phosphoshikimate. Q177 contributes to the phosphoenolpyruvate binding site. The active-site Proton acceptor is the D328. The phosphoenolpyruvate site is built by R359 and R402.

It belongs to the EPSP synthase family. Monomer.

It localises to the cytoplasm. The enzyme catalyses 3-phosphoshikimate + phosphoenolpyruvate = 5-O-(1-carboxyvinyl)-3-phosphoshikimate + phosphate. It participates in metabolic intermediate biosynthesis; chorismate biosynthesis; chorismate from D-erythrose 4-phosphate and phosphoenolpyruvate: step 6/7. Its function is as follows. Catalyzes the transfer of the enolpyruvyl moiety of phosphoenolpyruvate (PEP) to the 5-hydroxyl of shikimate-3-phosphate (S3P) to produce enolpyruvyl shikimate-3-phosphate and inorganic phosphate. This chain is 3-phosphoshikimate 1-carboxyvinyltransferase, found in Rhodopseudomonas palustris (strain HaA2).